The sequence spans 660 residues: ATP-dependent RNA helicase DDX18 (660 aa).

The tract at residues 16–153 (RNAKLRQRNL…DVKKADDSEV (138 aa)) is disordered. The span at 25–40 (LKLQETSDTSLSQPQN) shows a compositional bias: polar residues. A compositionally biased stretch (basic and acidic residues) spans 124–133 (PDTKKAKTEE). The span at 134-143 (SAEACEEPED) shows a compositional bias: acidic residues. The Q motif signature appears at 169–197 (FASLSNLVNENTLKAIEEMGFKRMTEIQH). Residues 200–375 (IRPLLEGRDL…RISLKKEPLY (176 aa)) form the Helicase ATP-binding domain. 213–220 (AKTGSGKT) contributes to the ATP binding site. The short motif at 323–326 (DEAD) is the DEAD box element. Residues 389–559 (GLEQGYVVCP…DIQSQLEKLI (171 aa)) enclose the Helicase C-terminal domain.

It belongs to the DEAD box helicase family. DDX18/HAS1 subfamily. As to quaternary structure, interacts with NOL8; the interaction is RNA-dependent. Interacts with PRC2 complex components EZH2, SUZ2 and JARID2; these interactions prevent deposition of the repressive H3K27me3 mark onto rDNA in pluripotent cells.

The protein localises to the nucleus. The protein resides in the nucleolus. Its subcellular location is the chromosome. It catalyses the reaction ATP + H2O = ADP + phosphate + H(+). ATP-dependent RNA helicase that plays a role in the regulation of R-loop homeostasis in both endogenous R-loop-prone regions and at sites of DNA damage. At endogenous loci such as actively transcribed genes, may act as a helicase to resolve the formation of R-loop during transcription and prevent the interference of R-loop with DNA-replication machinery. Also participates in the removal of DNA-lesion-associated R-loop. Plays an essential role for establishing pluripotency during embryogenesis and for pluripotency maintenance in embryonic stem cells. Mechanistically, prevents the polycomb repressive complex 2 (PRC2) from accessing rDNA loci and protects the active chromatin status in nucleolus. The sequence is that of ATP-dependent RNA helicase DDX18 (Ddx18) from Mus musculus (Mouse).